A 739-amino-acid chain; its full sequence is NAD(P)H-quinone oxidoreductase subunit 5, chloroplastic (739 aa).

16 helical membrane-spanning segments follow: residues 9–29 (WVIP…LILI), 39–59 (IWAF…VQLS), 89–109 (IDPL…LVLI), 125–145 (FVYI…SNLI), 147–167 (IYFF…FWFT), 185–205 (GDFG…SLEF), 219–239 (NGIN…GAVA), 258–278 (TPIS…FLLA), 280–300 (LLPL…VGTI), 327–347 (LGYM…FHLI), 354–374 (ALLF…VGYS), 396–416 (TTFL…CFWS), 425–445 (WLYS…TAFY), 542–562 (LFPL…GISF), 610–630 (TLAI…YSFF), and 719–739 (ISSY…FFLS).

It belongs to the complex I subunit 5 family. As to quaternary structure, NDH is composed of at least 16 different subunits, 5 of which are encoded in the nucleus.

The protein resides in the plastid. It is found in the chloroplast thylakoid membrane. It catalyses the reaction a plastoquinone + NADH + (n+1) H(+)(in) = a plastoquinol + NAD(+) + n H(+)(out). It carries out the reaction a plastoquinone + NADPH + (n+1) H(+)(in) = a plastoquinol + NADP(+) + n H(+)(out). Functionally, NDH shuttles electrons from NAD(P)H:plastoquinone, via FMN and iron-sulfur (Fe-S) centers, to quinones in the photosynthetic chain and possibly in a chloroplast respiratory chain. The immediate electron acceptor for the enzyme in this species is believed to be plastoquinone. Couples the redox reaction to proton translocation, and thus conserves the redox energy in a proton gradient. This Hordeum vulgare (Barley) protein is NAD(P)H-quinone oxidoreductase subunit 5, chloroplastic (ndhF).